The chain runs to 324 residues: tRNA U34 carboxymethyltransferase (324 aa).

Carboxy-S-adenosyl-L-methionine is bound by residues Lys-92, Trp-106, Lys-111, Gly-131, 153–155, Met-197, Tyr-201, and Arg-316; that span reads DPS.

It belongs to the class I-like SAM-binding methyltransferase superfamily. CmoB family. As to quaternary structure, homotetramer.

The catalysed reaction is carboxy-S-adenosyl-L-methionine + 5-hydroxyuridine(34) in tRNA = 5-carboxymethoxyuridine(34) in tRNA + S-adenosyl-L-homocysteine + H(+). Catalyzes carboxymethyl transfer from carboxy-S-adenosyl-L-methionine (Cx-SAM) to 5-hydroxyuridine (ho5U) to form 5-carboxymethoxyuridine (cmo5U) at position 34 in tRNAs. The polypeptide is tRNA U34 carboxymethyltransferase (Hahella chejuensis (strain KCTC 2396)).